The following is a 390-amino-acid chain: Stearoyl-[acyl-carrier-protein] 9-desaturase, chloroplastic (390 aa).

A chloroplast-targeting transit peptide spans 1-27 (MALKLCFPPHKMPSFPDARIRSHRVFM). Residues Glu132, Glu170, His173, Glu223, Glu256, and His259 each coordinate Fe cation.

This sequence belongs to the fatty acid desaturase type 2 family. As to quaternary structure, homodimer. Fe(2+) serves as cofactor.

It is found in the plastid. The protein resides in the chloroplast. It catalyses the reaction octadecanoyl-[ACP] + 2 reduced [2Fe-2S]-[ferredoxin] + O2 + 2 H(+) = (9Z)-octadecenoyl-[ACP] + 2 oxidized [2Fe-2S]-[ferredoxin] + 2 H2O. It participates in lipid metabolism; fatty acid metabolism. Its function is as follows. Converts stearoyl-ACP to oleoyl-ACP by introduction of a cis double bond between carbons 9 and 10 of the acyl chain. The polypeptide is Stearoyl-[acyl-carrier-protein] 9-desaturase, chloroplastic (Olea europaea (Common olive)).